A 76-amino-acid polypeptide reads, in one-letter code: Large ribosomal subunit protein eL29 (76 aa).

Residues 1-29 (MAKSKNHTNHNQNKKAHRNGIKRPLRKRH) are compositionally biased toward basic residues. Disordered regions lie at residues 1–33 (MAKSKNHTNHNQNKKAHRNGIKRPLRKRHESTL) and 47–76 (RKGNLSREESVKRYNERIASQKGKPKPVTL). Residue Ser31 is modified to Phosphoserine. Over residues 51–62 (LSREESVKRYNE) the composition is skewed to basic and acidic residues.

The protein belongs to the eukaryotic ribosomal protein eL29 family.

The polypeptide is Large ribosomal subunit protein eL29 (RpL29) (Drosophila melanogaster (Fruit fly)).